Here is a 754-residue protein sequence, read N- to C-terminus: Endothelin-converting enzyme 1 (754 aa).

Over Met-1 to Arg-52 the chain is Cytoplasmic. Thr-9 is modified (phosphothreonine). Residues Leu-53–Ile-73 traverse the membrane as a helical; Signal-anchor for type II membrane protein segment. The Extracellular segment spans residues Gln-74–Trp-754. In terms of domain architecture, Peptidase M13 spans Val-82–Trp-754. Cystine bridges form between Cys-83/Cys-88, Cys-106/Cys-739, Cys-114/Cys-699, Cys-169/Cys-419, and Cys-628/Cys-751. Residues Asn-150, Asn-171, Asn-194, Asn-254, Asn-300, Asn-346, Asn-367, and Asn-523 are each glycosylated (N-linked (GlcNAc...) asparagine). His-591 contacts Zn(2+). Residue Glu-592 is part of the active site. His-595 is a binding site for Zn(2+). 2 N-linked (GlcNAc...) asparagine glycosylation sites follow: Asn-616 and Asn-635. Glu-651 is a binding site for Zn(2+). The active-site Proton donor is Asp-655.

This sequence belongs to the peptidase M13 family. Homodimer; disulfide-linked. Interacts with PPP1R16B. Interacts with TSPAN8; this interaction recruits the endothelin converting enzyme ECE1 to tetraspanin-enriched microdomains and positively modulates its enzymatic activity. The cofactor is Zn(2+).

The protein resides in the cell membrane. It catalyses the reaction Hydrolysis of the 21-Trp-|-Val-22 bond in big endothelin to form endothelin 1.. Its activity is regulated as follows. Inhibited by phosphoramidon. Converts big endothelin-1 to endothelin-1. This chain is Endothelin-converting enzyme 1 (ECE1), found in Cavia porcellus (Guinea pig).